A 350-amino-acid polypeptide reads, in one-letter code: MPVLHNRISNDELKAKMLAESEPRTTISFYKYFTIASPQQTRDALYQVFTALDVFGRVYLAHEGINAQISVPQSKLETFRQQLYTFDPALDGLRLNIALEDDGKSFWVLRMKVRDRIVADGIDDPSFDASNVGDYLKAADVNVMLDDPDAVFIDMRNHYEYEVGHFENALEIPADTFREQLPKAVEMLREHADKKIVMYCTGGIRCEKASAWMKHNGFNKVWHIEGGIIEYARRAREQGLPVRFIGKNFVFDERMGERISDEVIAHCHQCGASCDSHTNCKNDGCHLLFIQCPQCASKFNGCCSEQCCEELALPEEEQRRRRAGRENGNKIFNKSRGRLNSKLSIPDPAE.

In terms of domain architecture, Rhodanese spans 146 to 240 (DDPDAVFIDM…YARRAREQGL (95 aa)). Catalysis depends on Cys-200, which acts as the Cysteine persulfide intermediate. Residues 319 to 328 (RRRRAGRENG) show a composition bias toward basic and acidic residues. The interval 319–350 (RRRRAGRENGNKIFNKSRGRLNSKLSIPDPAE) is disordered.

This sequence belongs to the TrhO family.

The enzyme catalyses uridine(34) in tRNA + AH2 + O2 = 5-hydroxyuridine(34) in tRNA + A + H2O. Its function is as follows. Catalyzes oxygen-dependent 5-hydroxyuridine (ho5U) modification at position 34 in tRNAs. This Salmonella choleraesuis (strain SC-B67) protein is tRNA uridine(34) hydroxylase.